Here is a 337-residue protein sequence, read N- to C-terminus: Pentalenene synthase (337 aa).

Asp80, Asp84, Asn219, Ser223, and Glu227 together coordinate Mg(2+). The short motif at 80–84 (DDLFD) is the DDXXD motif element.

It belongs to the terpene synthase family. In terms of assembly, monomer. Requires Mg(2+) as cofactor.

The enzyme catalyses (2E,6E)-farnesyl diphosphate = pentalenene + diphosphate. It functions in the pathway sesquiterpene biosynthesis; pentalenene biosynthesis; pentalenene from farnesyl diphosphate: step 1/1. It participates in antibiotic biosynthesis; pentalenolactone biosynthesis. Catalyzes the cyclization of farnesyl diphosphate (FPP) to the tricyclic sesquiterpene pentalenene, which is the hydrocarbon precursor of the pentalenolactone family of antibiotics produced by a variety of Streptomyces species. The polypeptide is Pentalenene synthase (pntA) (Streptomyces arenae).